A 114-amino-acid chain; its full sequence is Protein LLP homolog (114 aa).

2 stretches are compositionally biased toward basic residues: residues 1–21 (MAKS…RKKN) and 91–108 (QRKK…KSKL). Disordered stretches follow at residues 1–23 (MAKS…KNAP) and 91–114 (QRKK…GLAW).

It belongs to the learning-associated protein family.

The protein localises to the nucleus. The protein resides in the nucleolus. Its subcellular location is the chromosome. Its function is as follows. Regulates dendritic and spine growth and synaptic transmission. In Gallus gallus (Chicken), this protein is Protein LLP homolog (LLPH).